The chain runs to 359 residues: Tropomodulin-1 (359 aa).

The interval 36–61 (ELDPDNALLPAGLRQKDQTTKAPTGP) is disordered. The tropomyosin-binding stretch occupies residues 39–138 (PDNALLPAGL…CDIAAILGMH (100 aa)).

Belongs to the tropomodulin family. As to quaternary structure, binds to the N-terminus of tropomyosin and to actin. Interacts with FLII. As to expression, highly expressed in the erythrocyte, heart and skeletal muscle.

It localises to the cytoplasm. The protein resides in the cytoskeleton. In terms of biological role, blocks the elongation and depolymerization of the actin filaments at the pointed end. The Tmod/TM complex contributes to the formation of the short actin protofilament, which in turn defines the geometry of the membrane skeleton. May play an important role in regulating the organization of actin filaments by preferentially binding to a specific tropomyosin isoform at its N-terminus. The sequence is that of Tropomodulin-1 (TMOD1) from Homo sapiens (Human).